The primary structure comprises 111 residues: UPF0145 protein RBAM_010660 (111 aa).

It belongs to the UPF0145 family.

In Bacillus velezensis (strain DSM 23117 / BGSC 10A6 / LMG 26770 / FZB42) (Bacillus amyloliquefaciens subsp. plantarum), this protein is UPF0145 protein RBAM_010660.